The primary structure comprises 294 residues: Pyridoxal 5'-phosphate synthase subunit PdxS (294 aa).

Asp24 contacts D-ribose 5-phosphate. The active-site Schiff-base intermediate with D-ribose 5-phosphate is Lys81. Gly153 is a D-ribose 5-phosphate binding site. Residue Arg165 coordinates D-glyceraldehyde 3-phosphate. Residues Gly214 and 235 to 236 (GS) each bind D-ribose 5-phosphate.

Belongs to the PdxS/SNZ family. As to quaternary structure, in the presence of PdxT, forms a dodecamer of heterodimers.

It carries out the reaction aldehydo-D-ribose 5-phosphate + D-glyceraldehyde 3-phosphate + L-glutamine = pyridoxal 5'-phosphate + L-glutamate + phosphate + 3 H2O + H(+). The protein operates within cofactor biosynthesis; pyridoxal 5'-phosphate biosynthesis. Its function is as follows. Catalyzes the formation of pyridoxal 5'-phosphate from ribose 5-phosphate (RBP), glyceraldehyde 3-phosphate (G3P) and ammonia. The ammonia is provided by the PdxT subunit. Can also use ribulose 5-phosphate and dihydroxyacetone phosphate as substrates, resulting from enzyme-catalyzed isomerization of RBP and G3P, respectively. This Bacillus pumilus (strain SAFR-032) protein is Pyridoxal 5'-phosphate synthase subunit PdxS.